Here is a 362-residue protein sequence, read N- to C-terminus: 45 kDa calcium-binding protein (362 aa).

Residues 1 to 36 (MVWPWVAMASRWGPLIGLAPCCLWLLGAVLLMDASA) form the signal peptide. An N-linked (GlcNAc...) asparagine glycan is attached at N40. EF-hand domains lie at 98–133 (RSRRKLMVIFSKVDVNTDRKISAKEMQRWIMEKTAE) and 137–172 (EAMEESKTHFRAVDPDGDGHVSWDEYKVKFLASKGH). A Phosphoserine modification is found at S99. Residues D111, N113, D115, K117, E122, D150, D152, D154, H156, and E161 each contribute to the Ca(2+) site. T193 bears the Phosphothreonine mark. EF-hand domains lie at 197–232 (LENLKDRWYQADSPPADLLLTEEEFLSFLHPEHSRG), 233–268 (MLRFMVKEIVRDLDQDGDKQLSVPEFISLPVGTVEN), 278–313 (WVKDRKKEFEELIDSNHDGIVTAEELESYMDPMNEY), and 314–349 (NALNEAKQMIAVADENQNHHLEPEEVLKYSEFFTGS). D213 lines the Ca(2+) pocket. A Phosphothreonine modification is found at T217. Ca(2+) is bound by residues E220, D246, D248, D250, Q252, and E257. T265 bears the Phosphothreonine mark. Residues D291, N293, and D295 each coordinate Ca(2+). T299 carries the post-translational modification Phosphothreonine. Ca(2+) contacts are provided by E302, D327, N329, N331, H333, and E338. The tract at residues 309 to 362 (PMNEYNALNEAKQMIAVADENQNHHLEPEEVLKYSEFFTGSKLVDYARSVHEEF) is necessary for intracellular retention in Golgi apparatus lumen.

This sequence belongs to the CREC family. In terms of assembly, isoform 5 interacts with STXBP1; the interaction is enhanced in presence of calcium. Isoform 5 interacts with STX3. In terms of tissue distribution, ubiquitous. Isoform 5 is expressed in pancreas.

It is found in the golgi apparatus lumen. Its subcellular location is the cytoplasm. The protein localises to the cell membrane. It localises to the cell projection. The protein resides in the bleb. Its function is as follows. May regulate calcium-dependent activities in the endoplasmic reticulum lumen or post-ER compartment. In terms of biological role, isoform 5 may be involved in the exocytosis of zymogens by pancreatic acini. The chain is 45 kDa calcium-binding protein (SDF4) from Homo sapiens (Human).